A 168-amino-acid chain; its full sequence is MAKVEAQQQKDDLQEKLIAVNRVSKVVKGGRIFSFTALTVVGDGNGRVGYGYGKAREVPAAIQKAMEKARRNMVTVELNEGTLHHPVKGRHTGSRVYMQPASQGTGIIAGGAMRAVLEVAGVHNVLSKAYGSTNPINIVRATVDALTHMKSPAQVAAKRGLSVEEIRG.

In terms of domain architecture, S5 DRBM spans 13–76 (LQEKLIAVNR…EKARRNMVTV (64 aa)).

It belongs to the universal ribosomal protein uS5 family. Part of the 30S ribosomal subunit. Contacts proteins S4 and S8.

Its function is as follows. With S4 and S12 plays an important role in translational accuracy. Functionally, located at the back of the 30S subunit body where it stabilizes the conformation of the head with respect to the body. This is Small ribosomal subunit protein uS5 from Shewanella amazonensis (strain ATCC BAA-1098 / SB2B).